Here is a 382-residue protein sequence, read N- to C-terminus: V-type proton ATPase subunit C 1 (382 aa).

Thr2 is modified (N-acetylthreonine).

Belongs to the V-ATPase C subunit family. In terms of assembly, V-ATPase is a heteromultimeric enzyme made up of two complexes: the ATP-hydrolytic V1 complex and the proton translocation V0 complex. The V1 complex consists of three catalytic AB heterodimers that form a heterohexamer, three peripheral stalks each consisting of EG heterodimers, one central rotor including subunits D and F, and the regulatory subunits C and H. The proton translocation complex V0 consists of the proton transport subunit a, a ring of proteolipid subunits c9c'', rotary subunit d, subunits e and f, and the accessory subunits ATP6AP1/Ac45 and ATP6AP2/PRR.

The protein resides in the cytoplasmic vesicle. Its subcellular location is the secretory vesicle. It localises to the synaptic vesicle membrane. It is found in the clathrin-coated vesicle membrane. Its function is as follows. Subunit of the V1 complex of vacuolar(H+)-ATPase (V-ATPase), a multisubunit enzyme composed of a peripheral complex (V1) that hydrolyzes ATP and a membrane integral complex (V0) that translocates protons. V-ATPase is responsible for acidifying and maintaining the pH of intracellular compartments and in some cell types, is targeted to the plasma membrane, where it is responsible for acidifying the extracellular environment. Subunit C is necessary for the assembly of the catalytic sector of the enzyme and is likely to have a specific function in its catalytic activity. The polypeptide is V-type proton ATPase subunit C 1 (ATP6V1C1) (Macaca fascicularis (Crab-eating macaque)).